The primary structure comprises 335 residues: DNA-directed RNA polymerase subunit alpha (335 aa).

The interval 1–233 (MTRTANEFLT…QQIAIFVDLQ (233 aa)) is alpha N-terminal domain (alpha-NTD). Residues 247 to 335 (VDPILLRPVD…MDDRFAYRSR (89 aa)) form an alpha C-terminal domain (alpha-CTD) region.

Belongs to the RNA polymerase alpha chain family. In terms of assembly, homodimer. The RNAP catalytic core consists of 2 alpha, 1 beta, 1 beta' and 1 omega subunit. When a sigma factor is associated with the core the holoenzyme is formed, which can initiate transcription.

The catalysed reaction is RNA(n) + a ribonucleoside 5'-triphosphate = RNA(n+1) + diphosphate. In terms of biological role, DNA-dependent RNA polymerase catalyzes the transcription of DNA into RNA using the four ribonucleoside triphosphates as substrates. This Acinetobacter baylyi (strain ATCC 33305 / BD413 / ADP1) protein is DNA-directed RNA polymerase subunit alpha.